Consider the following 424-residue polypeptide: Glutamyl-tRNA reductase (424 aa).

Substrate contacts are provided by residues 53–56, S111, 116–118, and Q122; these read TCNR and EPQ. The Nucleophile role is filled by C54. Residue 191–196 coordinates NADP(+); the sequence is GAGEMI.

It belongs to the glutamyl-tRNA reductase family. Homodimer.

It catalyses the reaction (S)-4-amino-5-oxopentanoate + tRNA(Glu) + NADP(+) = L-glutamyl-tRNA(Glu) + NADPH + H(+). It functions in the pathway porphyrin-containing compound metabolism; protoporphyrin-IX biosynthesis; 5-aminolevulinate from L-glutamyl-tRNA(Glu): step 1/2. In terms of biological role, catalyzes the NADPH-dependent reduction of glutamyl-tRNA(Glu) to glutamate 1-semialdehyde (GSA). This Bordetella avium (strain 197N) protein is Glutamyl-tRNA reductase.